We begin with the raw amino-acid sequence, 170 residues long: Flavodoxin (170 aa).

A Flavodoxin-like domain is found at 4–165 (IGLFFGTQTG…RIQAWVAQLK (162 aa)).

This sequence belongs to the flavodoxin family. The cofactor is FMN.

Its function is as follows. Low-potential electron donor to a number of redox enzymes. This Picosynechococcus sp. (strain ATCC 27264 / PCC 7002 / PR-6) (Agmenellum quadruplicatum) protein is Flavodoxin (isiB).